The chain runs to 483 residues: MENAISTVPEFLPALPEILLAVGAMALLMYGVFRKDCDARETSLGALALFALVGAFLIIEPNAYVETFGGMFVIDGFTKFMKLLILLAAAAAIVMSLTFIRREGMDRFEYPVLIILATLGMFMMVSANGLISLYMGLELQSLSLYVIAAFHRDNTRATEAGLKYFVLGALASGMLLYGASLIYGFTGSVQFGSIATVLQADGTNIGVIFGIVFVLAGLAFKISAVPFHMWTPDVYEGAPTPVTAFFAGAPKVAAMALILRVLFVAFPSMESEWQQIIVFIAIASMVLGAFAAIGQSNIKRLMAYSSISHMGFAMVGLAAGTPEGVRGVLIYLVIYVVMNAGVFCCILAMQRKEGYVENISDLAGLSRNQPMVAFMMAMLMFSLAGVPPLAGFFGKFYVFMAAVEAGLYPLAVIGVLASVVGAFYYLRIVKIMYFDEAAEPFIQPMPGELTAVLGISGVFTLFFFVYPAPLILASQAAVRALLP.

Transmembrane regions (helical) follow at residues 13–33, 45–65, 80–100, 111–131, 165–185, 205–225, 244–264, 276–296, 301–321, 328–348, 373–393, 407–429, and 452–472; these read PALP…YGVF, GALA…NAYV, FMKL…LTFI, PVLI…NGLI, FVLG…IYGF, IGVI…ISAV, AFFA…VLFV, IIVF…IGQS, LMAY…AAGT, VLIY…CILA, AFMM…AGFF, LYPL…LRIV, and VLGI…PLIL.

The protein belongs to the complex I subunit 2 family. In terms of assembly, NDH-1 is composed of 14 different subunits. Subunits NuoA, H, J, K, L, M, N constitute the membrane sector of the complex.

It is found in the cell inner membrane. It catalyses the reaction a quinone + NADH + 5 H(+)(in) = a quinol + NAD(+) + 4 H(+)(out). Functionally, NDH-1 shuttles electrons from NADH, via FMN and iron-sulfur (Fe-S) centers, to quinones in the respiratory chain. The immediate electron acceptor for the enzyme in this species is believed to be ubiquinone. Couples the redox reaction to proton translocation (for every two electrons transferred, four hydrogen ions are translocated across the cytoplasmic membrane), and thus conserves the redox energy in a proton gradient. This Parvibaculum lavamentivorans (strain DS-1 / DSM 13023 / NCIMB 13966) protein is NADH-quinone oxidoreductase subunit N.